Here is a 590-residue protein sequence, read N- to C-terminus: Aspartate--tRNA(Asp/Asn) ligase (590 aa).

Residue Glu182 participates in L-aspartate binding. Positions 206 to 209 (QLFK) are aspartate. Residue Arg228 coordinates L-aspartate. ATP is bound by residues 228 to 230 (RDE) and Gln237. An L-aspartate-binding site is contributed by His454. Residue Glu488 participates in ATP binding. Position 495 (Arg495) interacts with L-aspartate. 540-543 (GLDR) serves as a coordination point for ATP.

This sequence belongs to the class-II aminoacyl-tRNA synthetase family. Type 1 subfamily. Homodimer.

It is found in the cytoplasm. It catalyses the reaction tRNA(Asx) + L-aspartate + ATP = L-aspartyl-tRNA(Asx) + AMP + diphosphate. Aspartyl-tRNA synthetase with relaxed tRNA specificity since it is able to aspartylate not only its cognate tRNA(Asp) but also tRNA(Asn). Reaction proceeds in two steps: L-aspartate is first activated by ATP to form Asp-AMP and then transferred to the acceptor end of tRNA(Asp/Asn). This chain is Aspartate--tRNA(Asp/Asn) ligase, found in Halothermothrix orenii (strain H 168 / OCM 544 / DSM 9562).